Reading from the N-terminus, the 346-residue chain is tRNA N6-adenosine threonylcarbamoyltransferase (346 aa).

His111 and His115 together coordinate Fe cation. Residues 134–138 (LVSGG), Asp167, Gly180, and Asn279 contribute to the substrate site. Asp307 contacts Fe cation.

The protein belongs to the KAE1 / TsaD family. Fe(2+) serves as cofactor.

Its subcellular location is the cytoplasm. The catalysed reaction is L-threonylcarbamoyladenylate + adenosine(37) in tRNA = N(6)-L-threonylcarbamoyladenosine(37) in tRNA + AMP + H(+). Its function is as follows. Required for the formation of a threonylcarbamoyl group on adenosine at position 37 (t(6)A37) in tRNAs that read codons beginning with adenine. Is involved in the transfer of the threonylcarbamoyl moiety of threonylcarbamoyl-AMP (TC-AMP) to the N6 group of A37, together with TsaE and TsaB. TsaD likely plays a direct catalytic role in this reaction. This is tRNA N6-adenosine threonylcarbamoyltransferase from Burkholderia lata (strain ATCC 17760 / DSM 23089 / LMG 22485 / NCIMB 9086 / R18194 / 383).